The sequence spans 256 residues: uncharacterized protein (256 aa).

ATP is bound at residue 29-36; that stretch reads GDDHSGKT.

This is an uncharacterized protein from Saccharomyces cerevisiae (strain ATCC 204508 / S288c) (Baker's yeast).